A 589-amino-acid chain; its full sequence is Actin-histidine N-methyltransferase (589 aa).

Positions 1–22 (MGKKSRVKTQKSGTGATATVSP) are disordered. Positions 10–20 (QKSGTGATATV) are enriched in polar residues. S-adenosyl-L-methionine-binding positions include arginine 75, 104–106 (EGF), arginine 254, 275–279 (DMCNH), and 325–327 (SGF). One can recognise an SET domain in the interval 94 to 314 (EGFEMVNFKE…AGEQIYIFYG (221 aa)). Serine 513 is subject to Phosphoserine. Positions 547–589 (LVNGERSFPNGTRSEEDLKQEERKRAKGDAKESSSDSTDAVKE) are disordered. Positions 559-589 (RSEEDLKQEERKRAKGDAKESSSDSTDAVKE) are enriched in basic and acidic residues.

The protein belongs to the class V-like SAM-binding methyltransferase superfamily. SETD3 actin-histidine methyltransferase family. Interacts with MYOD1. In terms of processing, phosphorylated by GSK3B, which is required for recognition by the SCF(FBXW7) complex and subsequent degradation. Ubiquitinated by the SCF(FBXW7) complex following phosphorylation by GSK3B, leading to its degradation by the proteasome.

It localises to the cytoplasm. It is found in the nucleus. The enzyme catalyses L-histidyl-[protein] + S-adenosyl-L-methionine = N(tele)-methyl-L-histidyl-[protein] + S-adenosyl-L-homocysteine + H(+). In terms of biological role, protein-histidine N-methyltransferase that specifically mediates 3-methylhistidine (tele-methylhistidine) methylation of actin at 'His-73'. Histidine methylation of actin is required for smooth muscle contraction of the laboring uterus during delivery. Does not have protein-lysine N-methyltransferase activity and probably only catalyzes histidine methylation of actin. The protein is Actin-histidine N-methyltransferase of Dasypus novemcinctus (Nine-banded armadillo).